Here is a 538-residue protein sequence, read N- to C-terminus: Putative cysteine ligase BshC (538 aa).

The stretch at 460–485 (KINEQIELLERMLKRNIEKKHEVELN) forms a coiled coil.

The protein belongs to the BshC family.

Its function is as follows. Involved in bacillithiol (BSH) biosynthesis. May catalyze the last step of the pathway, the addition of cysteine to glucosamine malate (GlcN-Mal) to generate BSH. The chain is Putative cysteine ligase BshC from Bacillus cereus (strain Q1).